Consider the following 386-residue polypeptide: D-amino-acid oxidase (386 aa).

9 residues coordinate FAD: glycine 14, glycine 15, valine 16, valine 17, glutamate 39, arginine 40, alanine 51, glycine 52, and glycine 53. Residues 109 to 138 (SSSPPHPLLPPWVDPSASAAPPRELGTPDT) form a disordered region. The span at 112-121 (PPHPLLPPWV) shows a compositional bias: pro residues. Positions 174, 175, and 176 each coordinate FAD. D-serine-binding residues include tyrosine 253, tyrosine 261, and lysine 332. Residues tyrosine 261 and lysine 332 each contribute to the D-proline site. Residues lysine 332, glycine 344, isoleucine 345, glycine 362, and alanine 364 each contribute to the FAD site. Lysine 332 provides a ligand contact to D-dopa. Residue glycine 362 coordinates D-serine. Glycine 362 is a D-proline binding site. Glycine 362 is a D-dopa binding site.

It belongs to the DAMOX/DASOX family.

It carries out the reaction a D-alpha-amino acid + O2 + H2O = a 2-oxocarboxylate + H2O2 + NH4(+). The enzyme catalyses D-alanine + O2 + H2O = pyruvate + H2O2 + NH4(+). The catalysed reaction is D-aspartate + O2 + H2O = oxaloacetate + H2O2 + NH4(+). Its function is as follows. Catalyzes the oxidative deamination of D-amino acids with broad substrate specificity. Enables the organism to utilize D-amino acids as a source of nutrients. This Zea mays (Maize) protein is D-amino-acid oxidase.